Consider the following 752-residue polypeptide: Glutamate carboxypeptidase 2 (752 aa).

The Cytoplasmic portion of the chain corresponds to 1-19 (MWNAQQDSDSAEALGRRQR). The residue at position 10 (Ser-10) is a Phosphoserine. A helical; Signal-anchor for type II membrane protein membrane pass occupies residues 20-44 (WFCAGTLVLAFTGTFIIGFLFGWFI). Residues 45–752 (KPSNDSTSSV…AAAETLREVD (708 aa)) are Extracellular-facing. N-linked (GlcNAc...) asparagine glycosylation is found at Asn-48, Asn-78, Asn-123, Asn-155, and Asn-197. Residues Arg-212 and Asn-259 each contribute to the substrate site. Positions 271 and 274 each coordinate Ca(2+). The tract at residues 276-589 (ANEYAYRHEF…QVRGAMVFEL (314 aa)) is NAALADase. The N-linked (GlcNAc...) asparagine glycan is linked to Asn-338. Zn(2+)-binding residues include His-379 and Asp-389. Glu-426 is a binding site for substrate. The Nucleophile; for NAALADase activity role is filled by Glu-426. Glu-427 lines the Zn(2+) pocket. Residues Glu-435 and Glu-438 each contribute to the Ca(2+) site. Position 455 (Asp-455) interacts with Zn(2+). Residues Asn-461 and Asn-478 are each glycosylated (N-linked (GlcNAc...) asparagine). Residues 519-520 (SG), Asn-521, 536-538 (RAR), Tyr-554, and 554-555 (YH) each bind substrate. A Zn(2+)-binding site is contributed by His-555. N-linked (GlcNAc...) asparagine glycosylation is present at Asn-615. The active-site Charge relay system is the Ser-630. Residue Asn-640 is glycosylated (N-linked (GlcNAc...) asparagine). Residues Asp-668 and His-691 each act as charge relay system in the active site. A substrate-binding site is contributed by 701–702 (KY).

Belongs to the peptidase M28 family. M28B subfamily. As to quaternary structure, homodimer. It depends on Zn(2+) as a cofactor. As to expression, widely expressed throughout brain regions with highest levels in the hippocampus, dentate gyrus, priform cortex, choroid plexus of ventricles, pineal gland, anterior lobe of the pituitary gland and supraoptic nucleus. High levels also found in the cerebral cortex, substantia nigra, pontine nucleus and the granule cell layer of cerebellum. Highly expressed in astrocytes and non-myelinating Schwann cells. Also expressed in kidney, localizing to the proximal brush border of the renal tube.

The protein resides in the cell membrane. The catalysed reaction is Release of an unsubstituted, C-terminal glutamyl residue, typically from Ac-Asp-Glu or folylpoly-gamma-glutamates.. The NAALADase activity is inhibited by beta-NAAG, quisqualic acid and 2-(phosphonomethyl)glutaric acid (PMG). Functionally, has both folate hydrolase and N-acetylated-alpha-linked-acidic dipeptidase (NAALADase) activity. Has a preference for tri-alpha-glutamate peptides. In the intestine, required for the uptake of folate. In the brain, modulates excitatory neurotransmission through the hydrolysis of the neuropeptide, N-aceylaspartylglutamate (NAAG), thereby releasing glutamate. Also exhibits a dipeptidyl-peptidase IV type activity. In vitro, cleaves Gly-Pro-AMC. This chain is Glutamate carboxypeptidase 2 (Folh1), found in Rattus norvegicus (Rat).